We begin with the raw amino-acid sequence, 386 residues long: Putative acid--amine ligase YgiC (386 aa).

100-102 serves as a coordination point for ATP; the sequence is RLD. Mg(2+)-binding residues include Asp102, Glu115, and Asn117. ATP contacts are provided by residues Lys267, Lys302, Gly309, Gln336, and 371 to 373; that span reads LIT.

It belongs to the glutathionylspermidine synthase preATP-grasp family.

In terms of biological role, may be a ligase forming an amide bond. Shows ATPase activity. The sequence is that of Putative acid--amine ligase YgiC (ygiC) from Escherichia coli O157:H7.